We begin with the raw amino-acid sequence, 400 residues long: Methylthioribose kinase (400 aa).

Residues Asn44, Lys61, and 115 to 117 each bind ATP; that span reads EDL. Asp233 contacts substrate. Residue 250–252 participates in ATP binding; the sequence is DPE. Substrate is bound at residue Arg340.

The protein belongs to the methylthioribose kinase family. In terms of assembly, homodimer.

The catalysed reaction is 5-(methylsulfanyl)-D-ribose + ATP = 5-(methylsulfanyl)-alpha-D-ribose 1-phosphate + ADP + H(+). Its pathway is amino-acid biosynthesis; L-methionine biosynthesis via salvage pathway; S-methyl-5-thio-alpha-D-ribose 1-phosphate from S-methyl-5'-thioadenosine (hydrolase route): step 2/2. In terms of biological role, catalyzes the phosphorylation of methylthioribose into methylthioribose-1-phosphate. The sequence is that of Methylthioribose kinase from Geobacillus sp. (strain WCH70).